Here is a 551-residue protein sequence, read N- to C-terminus: Chloride channel CLIC-like protein 1 (551 aa).

An N-terminal signal peptide occupies residues 1–18 (MLCSLLLCECLLLVAGYA). Residues 19-184 (HDDDWIDPTD…EDSFGVDPYN (166 aa)) lie on the Lumenal side of the membrane. The helical transmembrane segment at 185 to 205 (VLMVLLCLLCIVVLVATELWT) threads the bilayer. The Cytoplasmic portion of the chain corresponds to 206–216 (YVRWYTQLRRV). The chain crosses the membrane as a helical span at residues 217–237 (LIISFLFSLGWNWMYLYKLAF). The Lumenal segment spans residues 238-329 (AQHQAEVAKM…GEFIKALMKE (92 aa)). A helical transmembrane segment spans residues 330 to 350 (IPALLHLPVLIIMALAILSFC). The Cytoplasmic segment spans residues 351–551 (YGAGKSVHVL…GQDPVSSPCG (201 aa)). The disordered stretch occupies residues 363–415 (IGGPESEPPQALRPRDRRRQEEIDYRPDGGAGDADFHYRGQMGPTEQGPYAKT). Basic and acidic residues predominate over residues 380–389 (RRQEEIDYRP). Phosphoserine occurs at positions 438 and 464. Positions 447 to 551 (VPDAEAREHP…GQDPVSSPCG (105 aa)) are disordered. Thr-482 is modified (phosphothreonine). A compositionally biased stretch (polar residues) spans 488 to 508 (TESSQSAKPVSGQDTSGNTEG). Ser-509, Ser-524, and Ser-532 each carry phosphoserine.

Belongs to the chloride channel MCLC family. Homomultimers. Interacts with mitochondrial protein PIGBOS1 (via C-terminus); the interaction occurs at the mitochondria-associated endoplasmic reticulum (ER) membrane, a zone of contact between the ER and mitochondrial membranes, but does not appear to play a role in ER-mitochondria tethering and is not affected by ER stress. Interacts with CALR. In terms of tissue distribution, expressed in the retina of the eye, with extensive expression in the lamina cribrosa, optic nerve, ganglion cell layer, inner nuclear layer, outer nuclear layer and retinal pigment epithelium.

The protein resides in the endoplasmic reticulum membrane. The enzyme catalyses chloride(in) = chloride(out). The catalysed reaction is bromide(in) = bromide(out). It catalyses the reaction nitrate(in) = nitrate(out). It carries out the reaction fluoride(in) = fluoride(out). Its activity is regulated as follows. Inhibited by ER lumenal Ca(2+). Functionally, anion-selective channel with Ca(2+)-dependent and voltage-independent gating. Permeable to small monovalent anions with selectivity for bromide &gt; chloride &gt; nitrate &gt; fluoride. Operates in the endoplasmic reticulum (ER) membrane where it mediates chloride efflux to compensate for the loss of positive charges from the ER lumen upon Ca(2+) release. Contributes to the maintenance of ER Ca(2+) pools and activation of unfolded protein response to prevent accumulation of misfolded proteins in the ER lumen. Particularly involved in ER homeostasis mechanisms underlying motor neurons and retinal photoreceptors survival. The polypeptide is Chloride channel CLIC-like protein 1 (Homo sapiens (Human)).